The primary structure comprises 656 residues: Translation factor GUF1 homolog, mitochondrial (656 aa).

Residues methionine 1–phenylalanine 29 constitute a mitochondrion transit peptide. One can recognise a tr-type G domain in the interval glutamate 54 to valine 238. GTP is bound by residues alanine 63 to serine 70, aspartate 131 to histidine 135, and threonine 185 to aspartate 188.

It belongs to the TRAFAC class translation factor GTPase superfamily. Classic translation factor GTPase family. LepA subfamily.

It is found in the mitochondrion inner membrane. The catalysed reaction is GTP + H2O = GDP + phosphate + H(+). Its function is as follows. Promotes mitochondrial protein synthesis. May act as a fidelity factor of the translation reaction, by catalyzing a one-codon backward translocation of tRNAs on improperly translocated ribosomes. Binds to mitochondrial ribosomes in a GTP-dependent manner. This is Translation factor GUF1 homolog, mitochondrial from Phytophthora infestans (strain T30-4) (Potato late blight agent).